A 191-amino-acid polypeptide reads, in one-letter code: GTP-binding protein CIN4 (191 aa).

GTP is bound by residues 23-30, 69-73, and 131-134; these read GLDNSGKS, DIGGQ, and NKID.

In terms of biological role, implicated in yeast microtubule function. This chain is GTP-binding protein CIN4 (CIN4), found in Saccharomyces cerevisiae (strain ATCC 204508 / S288c) (Baker's yeast).